A 223-amino-acid chain; its full sequence is Ribonuclease 3 (223 aa).

The RNase III domain maps to 3-125 (LERLQKKLGY…IIAAIYLDAG (123 aa)). E38 is a Mg(2+) binding site. D42 is a catalytic residue. Positions 111 and 114 each coordinate Mg(2+). The active site involves E114. Positions 152–222 (DPKTRLQEFL…AEQVLAKLTT (71 aa)) constitute a DRBM domain.

The protein belongs to the ribonuclease III family. In terms of assembly, homodimer. Mg(2+) is required as a cofactor.

The protein localises to the cytoplasm. It carries out the reaction Endonucleolytic cleavage to 5'-phosphomonoester.. Functionally, digests double-stranded RNA. Involved in the processing of primary rRNA transcript to yield the immediate precursors to the large and small rRNAs (23S and 16S). Processes some mRNAs, and tRNAs when they are encoded in the rRNA operon. Processes pre-crRNA and tracrRNA of type II CRISPR loci if present in the organism. The protein is Ribonuclease 3 of Actinobacillus pleuropneumoniae serotype 3 (strain JL03).